A 233-amino-acid polypeptide reads, in one-letter code: Purine nucleoside phosphorylase DeoD-type (233 aa).

H4 contributes to the a purine D-ribonucleoside binding site. Residues G20, R24, R43, and 87–90 (RVGS) each bind phosphate. Residues 178–180 (EME) and 202–203 (SD) contribute to the a purine D-ribonucleoside site. The active-site Proton donor is the D203.

The protein belongs to the PNP/UDP phosphorylase family. In terms of assembly, homohexamer; trimer of homodimers.

It carries out the reaction a purine D-ribonucleoside + phosphate = a purine nucleobase + alpha-D-ribose 1-phosphate. The enzyme catalyses a purine 2'-deoxy-D-ribonucleoside + phosphate = a purine nucleobase + 2-deoxy-alpha-D-ribose 1-phosphate. Its function is as follows. Catalyzes the reversible phosphorolytic breakdown of the N-glycosidic bond in the beta-(deoxy)ribonucleoside molecules, with the formation of the corresponding free purine bases and pentose-1-phosphate. This chain is Purine nucleoside phosphorylase DeoD-type, found in Bacillus subtilis (strain 168).